A 120-amino-acid chain; its full sequence is MSRIKRGVTTRAKHKRILDQAKGYRGRRKNTIRVARQAVEKAGQYAYRDRKVKKRSFRALWIQRINAAVRAEGLTYSQFIHGAKLAGIELDRKAMADLAMNEGAIFNAVIAQAKAALPAA.

The protein belongs to the bacterial ribosomal protein bL20 family.

Functionally, binds directly to 23S ribosomal RNA and is necessary for the in vitro assembly process of the 50S ribosomal subunit. It is not involved in the protein synthesizing functions of that subunit. The protein is Large ribosomal subunit protein bL20 of Novosphingobium aromaticivorans (strain ATCC 700278 / DSM 12444 / CCUG 56034 / CIP 105152 / NBRC 16084 / F199).